A 320-amino-acid chain; its full sequence is Phospho-N-acetylmuramoyl-pentapeptide-transferase (320 aa).

The next 9 helical transmembrane spans lie at 5-25 (FWAFTRAFIVTVIFMPAVIKF), 51-71 (MGGALFIAAASLSALIGSVAY), 75-95 (IGFVMVLIPILAVVAYAIIGG), 121-141 (LCAVVIMIIMWIMQIPLILNI), 143-163 (FIGVFNLGIFYFIFLWFWLVG), 176-196 (GLLTGTSLIVYLVYTWIALGV), 198-218 (NHIIVIFNASIIGALVGFLLF), 241-261 (IESIVLGIPFSLLWFGLIFVI), and 300-320 (IDALFWIVTAIIGIIGILYMS).

It belongs to the glycosyltransferase 4 family. MraY subfamily. Requires Mg(2+) as cofactor.

Its subcellular location is the cell membrane. It carries out the reaction UDP-N-acetyl-alpha-D-muramoyl-L-alanyl-gamma-D-glutamyl-L-lysyl-D-alanyl-D-alanine + di-trans,octa-cis-undecaprenyl phosphate = Mur2Ac(oyl-L-Ala-gamma-D-Glu-L-Lys-D-Ala-D-Ala)-di-trans,octa-cis-undecaprenyl diphosphate + UMP. Its pathway is cell wall biogenesis; peptidoglycan biosynthesis. Its function is as follows. Catalyzes the initial step of the lipid cycle reactions in the biosynthesis of the cell wall peptidoglycan: transfers peptidoglycan precursor phospho-MurNAc-pentapeptide from UDP-MurNAc-pentapeptide onto the lipid carrier undecaprenyl phosphate, yielding undecaprenyl-pyrophosphoryl-MurNAc-pentapeptide, known as lipid I. In Leuconostoc mesenteroides subsp. mesenteroides (strain ATCC 8293 / DSM 20343 / BCRC 11652 / CCM 1803 / JCM 6124 / NCDO 523 / NBRC 100496 / NCIMB 8023 / NCTC 12954 / NRRL B-1118 / 37Y), this protein is Phospho-N-acetylmuramoyl-pentapeptide-transferase.